Here is a 94-residue protein sequence, read N- to C-terminus: Mitochondrial import inner membrane translocase subunit Tim8 A (94 aa).

Positions 47-70 match the Twin CX3C motif motif; sequence CWDKCIDRPGNKLDSRTESCLVSC. Intrachain disulfides connect Cys-47–Cys-70 and Cys-51–Cys-66.

It belongs to the small Tim family. Heterohexamer; composed of 3 copies of TIMM8A and 3 copies of TIMM13, named soluble 70 kDa complex. Associates with the TIM22 complex, whose core is composed of TIMM22.

It localises to the mitochondrion inner membrane. Its function is as follows. Mitochondrial intermembrane chaperone that participates in the import and insertion of some multi-pass transmembrane proteins into the mitochondrial inner membrane. Also required for the transfer of beta-barrel precursors from the TOM complex to the sorting and assembly machinery (SAM complex) of the outer membrane. Acts as a chaperone-like protein that protects the hydrophobic precursors from aggregation and guide them through the mitochondrial intermembrane space. The TIMM8-TIMM13 complex mediates the import of some proteins while the predominant TIMM9-TIMM10 70 kDa complex mediates the import of much more proteins. The polypeptide is Mitochondrial import inner membrane translocase subunit Tim8 A (timm8a) (Xenopus laevis (African clawed frog)).